The following is a 542-amino-acid chain: Probable E3 ubiquitin-protein ligase ARI11 (542 aa).

A disordered region spans residues 1–25 (MSSSDRDIIDIESGEEDLYSDGGND). Residues 10 to 19 (DIESGEEDLY) show a composition bias toward acidic residues. The TRIAD supradomain stretch occupies residues 135–342 (VDIQCGICFE…SDHKACNAFK (208 aa)). Zn(2+) is bound by residues Cys-139, Cys-142, Cys-156, His-158, Cys-161, Cys-164, Cys-184, Cys-189, Cys-228, Cys-233, Cys-251, Cys-253, Cys-258, Cys-261, His-266, Cys-271, Cys-298, and Cys-301. An RING-type 1 zinc finger spans residues 139 to 189 (CGICFESYTRKEIARVSCGHPYCKTCWTGYITTKIEDGPGCLRVKCPEPSC). The segment at 208–271 (DKYYRYFLRS…CEDAHSPVDC (64 aa)) adopts an IBR-type zinc-finger fold. The RING-type 2; atypical zinc-finger motif lies at 298–328 (CPKCKRPIEKNTGCNHMSCSAPCRHYFCWAC). Cys-311 is a catalytic residue. Residues Cys-316, Cys-320, Cys-325, Cys-328, His-335, and Cys-338 each coordinate Zn(2+).

Belongs to the RBR family. Ariadne subfamily. Zn(2+) is required as a cofactor.

The catalysed reaction is [E2 ubiquitin-conjugating enzyme]-S-ubiquitinyl-L-cysteine + [acceptor protein]-L-lysine = [E2 ubiquitin-conjugating enzyme]-L-cysteine + [acceptor protein]-N(6)-ubiquitinyl-L-lysine.. It participates in protein modification; protein ubiquitination. Its function is as follows. Might act as an E3 ubiquitin-protein ligase, or as part of E3 complex, which accepts ubiquitin from specific E2 ubiquitin-conjugating enzymes and then transfers it to substrates. This Arabidopsis thaliana (Mouse-ear cress) protein is Probable E3 ubiquitin-protein ligase ARI11 (ARI11).